Consider the following 462-residue polypeptide: 23S rRNA (uracil(1939)-C(5))-methyltransferase RlmD (462 aa).

One can recognise a TRAM domain in the interval 6-76; it reads KSRKPQQPEY…KRLEEAEMVE (71 aa). Positions 90, 96, 99, and 178 each coordinate [4Fe-4S] cluster. Residues Q287, F316, N321, E340, D367, and D388 each contribute to the S-adenosyl-L-methionine site. The active-site Nucleophile is C414.

This sequence belongs to the class I-like SAM-binding methyltransferase superfamily. RNA M5U methyltransferase family. RlmD subfamily.

It catalyses the reaction uridine(1939) in 23S rRNA + S-adenosyl-L-methionine = 5-methyluridine(1939) in 23S rRNA + S-adenosyl-L-homocysteine + H(+). Catalyzes the formation of 5-methyl-uridine at position 1939 (m5U1939) in 23S rRNA. The chain is 23S rRNA (uracil(1939)-C(5))-methyltransferase RlmD from Acinetobacter baumannii (strain AB0057).